The primary structure comprises 124 residues: ATP synthase epsilon chain (124 aa).

It belongs to the ATPase epsilon chain family. As to quaternary structure, F-type ATPases have 2 components, CF(1) - the catalytic core - and CF(0) - the membrane proton channel. CF(1) has five subunits: alpha(3), beta(3), gamma(1), delta(1), epsilon(1). CF(0) has three main subunits: a, b and c.

The protein resides in the cell membrane. In terms of biological role, produces ATP from ADP in the presence of a proton gradient across the membrane. The polypeptide is ATP synthase epsilon chain (Streptomyces griseus subsp. griseus (strain JCM 4626 / CBS 651.72 / NBRC 13350 / KCC S-0626 / ISP 5235)).